The following is a 482-amino-acid chain: uncharacterized protein (482 aa).

The 75-residue stretch at 5-79 (IYYKFKSQKD…STSVIVRRVP (75 aa)) folds into the DWNN domain. The interval 86-108 (GTAARYVSGAPKTTGARSDSVKR) is disordered. A CCHC-type zinc finger spans residues 183–200 (YICYRCGQKGHWIQACPT). An RING-type; degenerate zinc finger spans residues 282-322 (CTLCKKLARNACRTPCCDKLFCEECIQTALLDSDFECPNCH). 2 disordered regions span residues 346–393 (KSVL…SSAV) and 447–482 (QVYH…TKTN). The span at 451-466 (NNRNPPRTNSRPSNAS) shows a compositional bias: low complexity.

The protein localises to the nucleus. This is an uncharacterized protein from Schizosaccharomyces pombe (strain 972 / ATCC 24843) (Fission yeast).